Consider the following 186-residue polypeptide: Adrenodoxin, mitochondrial (186 aa).

The transit peptide at 1-58 (MAVRLLRVASAALGDTAVRWQPLVGPRAGNRGPGGSIWLGLGGRAAAARTLSLSARAW) directs the protein to the mitochondrion. S61 is modified (phosphoserine). K64 carries the N6-acetyllysine; alternate modification. At K64 the chain carries N6-succinyllysine; alternate. The 105-residue stretch at 65–169 (ITVHFINRDG…NMTVRVPEAV (105 aa)) folds into the 2Fe-2S ferredoxin-type domain. C104, C110, C113, and C150 together coordinate [2Fe-2S] cluster. An N6-succinyllysine modification is found at K156. S175 carries the phosphoserine modification.

The protein belongs to the adrenodoxin/putidaredoxin family. Interacts with CYP11A1. It depends on [2Fe-2S] cluster as a cofactor.

The protein localises to the mitochondrion matrix. Functionally, essential for the synthesis of various steroid hormones. Participates in the reduction of mitochondrial cytochrome P450 for steroidogenesis. Transfers electrons from adrenodoxin reductase to CYP11A1, a cytochrome P450 that catalyzes cholesterol side-chain cleavage. Does not form a ternary complex with adrenodoxin reductase and CYP11A1 but shuttles between the two enzymes to transfer electrons. This Sus scrofa (Pig) protein is Adrenodoxin, mitochondrial (FDX1).